A 117-amino-acid chain; its full sequence is Ig heavy chain V region 1-72 (117 aa).

The signal sequence occupies residues 1–19 (MGWSCIMLFLAATATGVHS). The tract at residues 20–49 (QVQLQQPGAELVKPGASVKLSCKASGYTFT) is framework-1. Residues Cys41 and Cys115 are joined by a disulfide bond. The segment at 50–54 (SYWMH) is complementarity-determining-1. Residues 55 to 68 (WVKQRPGRGLEWIG) are framework-2. Positions 69-85 (RIDPNSGGTKYNEKFKS) are complementarity-determining-2. The interval 86-117 (KATLTVDKPSSTAYMQLSSLTSEDSAVYYCAR) is framework-3.

The sequence is that of Ig heavy chain V region 1-72 from Mus musculus (Mouse).